Consider the following 254-residue polypeptide: L-rhamnose 1-dehydrogenase (NAD(P)(+)) (254 aa).

NADP(+)-binding residues include Gly13, Ser15, Ile18, Asp64, Val65, and Asn91. Ser144 functions as the Proton donor in the catalytic mechanism. The beta-L-rhamnose site is built by Ser144, Ser146, Gln154, and Tyr157. Positions 157 and 161 each coordinate NADP(+). Catalysis depends on Tyr157, which acts as the Proton acceptor. The Lowers pKa of active site Tyr role is filled by Lys161. Thr189 is a beta-L-rhamnose binding site. Ile190 is an NADP(+) binding site. Asn195 contacts beta-L-rhamnose.

It belongs to the short-chain dehydrogenases/reductases (SDR) family.

It catalyses the reaction L-rhamnofuranose + NAD(+) = L-rhamnono-1,4-lactone + NADH + H(+). The enzyme catalyses L-rhamnofuranose + NADP(+) = L-rhamnono-1,4-lactone + NADPH + H(+). Its pathway is carbohydrate degradation; L-rhamnose degradation. Its function is as follows. NAD(P)-dependent dehydrogenase that catalyzes the oxidation of L-rhamnose to L-rhamnono-1,4-lactone. Also shows high activity with L-lyxose and low activity with L-mannose. Can utilize either NAD(+) or NADP(+), with a slight preference for NADP(+). Catalyzes the first step in an alternative pathway for rhamnose utilization that does not involve phosphorylated intermediates. The protein is L-rhamnose 1-dehydrogenase (NAD(P)(+)) of Sphingomonas sp. (strain SKA58).